The sequence spans 113 residues: Large ribosomal subunit protein uL22 (113 aa).

The protein belongs to the universal ribosomal protein uL22 family. In terms of assembly, part of the 50S ribosomal subunit.

In terms of biological role, this protein binds specifically to 23S rRNA; its binding is stimulated by other ribosomal proteins, e.g. L4, L17, and L20. It is important during the early stages of 50S assembly. It makes multiple contacts with different domains of the 23S rRNA in the assembled 50S subunit and ribosome. The globular domain of the protein is located near the polypeptide exit tunnel on the outside of the subunit, while an extended beta-hairpin is found that lines the wall of the exit tunnel in the center of the 70S ribosome. The protein is Large ribosomal subunit protein uL22 of Halothermothrix orenii (strain H 168 / OCM 544 / DSM 9562).